Reading from the N-terminus, the 461-residue chain is Coronin-1A (461 aa).

S2 is subject to N-acetylserine. At S2 the chain carries Phosphoserine; by PKC. WD repeat units follow at residues 13–63, 73–110, 123–160, 164–204, 207–251, 258–296, and 302–349; these read HVFG…LVLP, NVPL…MVWE, PVVT…LVWD, GAAV…RVIE, KGTV…ALWD, PLSL…RYFE, and PFLH…EPIA. Positions 407 to 418 are enriched in basic and acidic residues; that stretch reads NRGLDSARRRAT. A disordered region spans residues 407-431; sequence NRGLDSARRRATPEPSSTLSSDTVS. Residue S412 is modified to Phosphoserine; by PKC. Residue T418 is modified to Phosphothreonine. The span at 420-430 shows a compositional bias: polar residues; sequence EPSSTLSSDTV. Phosphoserine is present on S422. Positions 425–461 form a coiled coil; it reads LSSDTVSRLEEDVRNLNAIVQKLQERLDRLEETVQAK.

This sequence belongs to the WD repeat coronin family. As to quaternary structure, binds actin. Post-translationally, phosphorylation at Ser-412 by PKC strongly down-regulates the association with actin. Polyubiquitinated by RNF128 with 'Lys-48'-linked chains, leading to proteasomal degradation.

Its subcellular location is the cytoplasm. It localises to the cytoskeleton. The protein resides in the cell cortex. It is found in the cytoplasmic vesicle. The protein localises to the phagosome membrane. May be a crucial component of the cytoskeleton of highly motile cells, functioning both in the invagination of large pieces of plasma membrane, as well as in forming protrusions of the plasma membrane involved in cell locomotion. The protein is Coronin-1A (Coro1a) of Rattus norvegicus (Rat).